A 325-amino-acid chain; its full sequence is HPr kinase/phosphorylase (325 aa).

Active-site residues include His152 and Lys173. ATP is bound at residue 167–174 (GESGLGKS). A Mg(2+)-binding site is contributed by Ser174. Asp191 functions as the Proton acceptor; for phosphorylation activity. Proton donor; for dephosphorylation activity in the catalytic mechanism. The tract at residues 215–224 (LEVRGIGLLD) is important for the catalytic mechanism of both phosphorylation and dephosphorylation. A Mg(2+)-binding site is contributed by Glu216. The active site involves Arg258. Residues 279–284 (AVDAGR) are important for the catalytic mechanism of dephosphorylation.

It belongs to the HPrK/P family. In terms of assembly, homohexamer. The cofactor is Mg(2+).

It carries out the reaction [HPr protein]-L-serine + ATP = [HPr protein]-O-phospho-L-serine + ADP + H(+). It catalyses the reaction [HPr protein]-O-phospho-L-serine + phosphate + H(+) = [HPr protein]-L-serine + diphosphate. Its function is as follows. Catalyzes the ATP- as well as the pyrophosphate-dependent phosphorylation of a specific serine residue in HPr, a phosphocarrier protein of the phosphoenolpyruvate-dependent sugar phosphotransferase system (PTS). HprK/P also catalyzes the pyrophosphate-producing, inorganic phosphate-dependent dephosphorylation (phosphorolysis) of seryl-phosphorylated HPr (P-Ser-HPr). This chain is HPr kinase/phosphorylase, found in Leptothrix cholodnii (strain ATCC 51168 / LMG 8142 / SP-6) (Leptothrix discophora (strain SP-6)).